The primary structure comprises 184 residues: Ribosome-recycling factor (184 aa).

The protein belongs to the RRF family.

The protein resides in the cytoplasm. In terms of biological role, responsible for the release of ribosomes from messenger RNA at the termination of protein biosynthesis. May increase the efficiency of translation by recycling ribosomes from one round of translation to another. The sequence is that of Ribosome-recycling factor from Thermoanaerobacter pseudethanolicus (strain ATCC 33223 / 39E) (Clostridium thermohydrosulfuricum).